The sequence spans 82 residues: Cytochrome b559 subunit alpha (82 aa).

The helical transmembrane segment at Val-22–Phe-36 threads the bilayer. His-24 serves as a coordination point for heme.

This sequence belongs to the PsbE/PsbF family. Heterodimer of an alpha subunit and a beta subunit. PSII is composed of 1 copy each of membrane proteins PsbA, PsbB, PsbC, PsbD, PsbE, PsbF, PsbH, PsbI, PsbJ, PsbK, PsbL, PsbM, PsbT, PsbX, PsbY, PsbZ, Psb30/Ycf12, peripheral proteins PsbO, CyanoQ (PsbQ), PsbU, PsbV and a large number of cofactors. It forms dimeric complexes. Heme b serves as cofactor.

The protein resides in the cellular thylakoid membrane. Functionally, this b-type cytochrome is tightly associated with the reaction center of photosystem II (PSII). PSII is a light-driven water:plastoquinone oxidoreductase that uses light energy to abstract electrons from H(2)O, generating O(2) and a proton gradient subsequently used for ATP formation. It consists of a core antenna complex that captures photons, and an electron transfer chain that converts photonic excitation into a charge separation. This Synechococcus sp. (strain CC9311) protein is Cytochrome b559 subunit alpha.